Consider the following 605-residue polypeptide: Aspartate--tRNA(Asp/Asn) ligase (605 aa).

An L-aspartate-binding site is contributed by E186. Positions 210–213 (QQFK) are aspartate. R232 and H460 together coordinate L-aspartate. 232 to 234 (RDE) contacts ATP. E494 serves as a coordination point for ATP. R501 contacts L-aspartate. ATP is bound at residue 546-549 (GLDR).

Belongs to the class-II aminoacyl-tRNA synthetase family. Type 1 subfamily. As to quaternary structure, homodimer.

The protein localises to the cytoplasm. The catalysed reaction is tRNA(Asx) + L-aspartate + ATP = L-aspartyl-tRNA(Asx) + AMP + diphosphate. In terms of biological role, aspartyl-tRNA synthetase with relaxed tRNA specificity since it is able to aspartylate not only its cognate tRNA(Asp) but also tRNA(Asn). Reaction proceeds in two steps: L-aspartate is first activated by ATP to form Asp-AMP and then transferred to the acceptor end of tRNA(Asp/Asn). The protein is Aspartate--tRNA(Asp/Asn) ligase of Chlorobium chlorochromatii (strain CaD3).